A 406-amino-acid chain; its full sequence is Zinc metalloprotease Rip1 (406 aa).

A helical transmembrane segment spans residues methionine 1–histidine 21. Residue histidine 21 participates in Zn(2+) binding. Residue glutamate 22 is part of the active site. Histidine 25 contacts Zn(2+). Residues proline 108 to leucine 128 form a helical membrane-spanning segment. One can recognise a PDZ domain in the interval valine 125 to valine 209. Residue aspartate 206 coordinates Zn(2+). The next 2 membrane-spanning stretches (helical) occupy residues asparagine 327–alanine 349 and leucine 375–threonine 395.

The protein belongs to the peptidase M50B family. It depends on Zn(2+) as a cofactor.

It localises to the cell membrane. Proteolysis is inhibited by Wag31; when Wag31 is non-functional oxidative stress increases proteolysis. Functionally, a probable intramembrane site-2 protease (S2P) that cleaves type-2 transmembrane proteins within their membrane-spanning domains. Degrades PbpB (PBP3, FtsI) under conditions of oxidatives stress; degradation is inhibited by Wag31-PbpB interaction. Also cleaves anti-sigma factors RskA, RslA and RslM. Site-1 proteases have not yet been identified in this organism. Its function is as follows. Regulated intramembrane proteolysis (RIP) occurs when an extracytoplasmic signal (possibly oxidative stress) triggers a concerted proteolytic cascade to transmit information and elicit cellular responses. The membrane-spanning regulatory substrate protein (includes anti-sigma factors RskA, RslA, RsmA, and PbpB) is first cut extracytoplasmically (site-1 protease, S1P), then within the membrane itself (site-2 protease, S2P, this entry), while cytoplasmic proteases finish degrading the regulatory protein, liberating the effector protein (ECF sigma factors SigK, SigL and SigM). This is Zinc metalloprotease Rip1 (rip1) from Mycolicibacterium smegmatis (strain ATCC 700084 / mc(2)155) (Mycobacterium smegmatis).